The following is a 581-amino-acid chain: Phosphatidylinositol N-acetylglucosaminyltransferase subunit Q (581 aa).

5 consecutive transmembrane segments (helical) span residues 276–298 (ANMLVSVLLDVALGLLLLSWLHS), 344–366 (LGRFFLYHIHLWISYIHLMSPFI), 381–403 (LTVALSIFSDIIALLTFHIYCFY), 446–468 (LFIGTLLFTILVFLLPTTALYYL), and 478–500 (ITVQGLIHLLVDLINSLPLYSLG).

Belongs to the PIGQ family. As to quaternary structure, component of the glycosylphosphatidylinositol-N-acetylglucosaminyltransferase (GPI-GnT) complex composed at least by PIGA, PIGC, PIGH, PIGP, PIGQ, PIGY and DPM2. Interacts with PIGA, PIGH and PIGC.

The protein localises to the membrane. Its pathway is glycolipid biosynthesis; glycosylphosphatidylinositol-anchor biosynthesis. Part of the glycosylphosphatidylinositol-N-acetylglucosaminyltransferase (GPI-GnT) complex that catalyzes the transfer of N-acetylglucosamine from UDP-N-acetylglucosamine to phosphatidylinositol and participates in the first step of GPI biosynthesis. The protein is Phosphatidylinositol N-acetylglucosaminyltransferase subunit Q of Mus musculus (Mouse).